The sequence spans 150 residues: Leukotriene C4 synthase (150 aa).

Residues 1–6 are Cytoplasmic-facing; it reads MKEETA. Residues 7–27 traverse the membrane as a helical segment; that stretch reads LLATVTLLGVLLQAYFSLQVI. At 28-48 the chain is on the lumenal side; that stretch reads SARRTFHVSPPLTSGPPEFER. Residue R30 coordinates glutathione. R31 serves as the catalytic Proton donor. S36 is subject to Phosphoserine. Residues 49-69 traverse the membrane as a helical segment; the sequence is VFRAQVNCSEYFPLFLATLWV. Glutathione is bound by residues 51-55 and 58-59; these read RAQVN and EY. At 70–73 the chain is on the cytoplasmic side; sequence AGIF. Residues 74-94 form a helical membrane-spanning segment; that stretch reads FHEGAAALCGLFYLFARLRYF. 93 to 97 contacts glutathione; the sequence is YFQGY. Topologically, residues 95–104 are lumenal; that stretch reads QGYARSAQHR. R104 acts as the Proton acceptor in catalysis. A helical membrane pass occupies residues 105 to 124; that stretch reads LDPLYASARALWLLVAMAAL. The Cytoplasmic segment spans residues 125–150; it reads GLLVHFLPGTLRAALFRWLQVLLPMA.

This sequence belongs to the MAPEG family. In terms of assembly, homotrimer. Interacts with ALOX5AP and ALOX5. Post-translationally, phosphorylation at Ser-36 by RPS6KB1 inhibits the leukotriene-C4 synthase activity.

It is found in the nucleus outer membrane. The protein resides in the endoplasmic reticulum membrane. The protein localises to the nucleus membrane. It carries out the reaction leukotriene C4 = leukotriene A4 + glutathione. The enzyme catalyses (13S,14S)-epoxy-(4Z,7Z,9E,11E,16Z,19Z)-docosahexaenoate + glutathione = (13R)-S-glutathionyl-(14S)-hydroxy-(4Z,7Z,9E,11E,16Z,19Z)-docosahexaenoate. It participates in lipid metabolism; leukotriene C4 biosynthesis. Inhibited by MK886. Catalyzes the conjugation of leukotriene A4 with reduced glutathione (GSH) to form leukotriene C4 with high specificity. Can also catalyze the transfer of a glutathionyl group from glutathione (GSH) to 13(S),14(S)-epoxy-docosahexaenoic acid to form maresin conjugate in tissue regeneration 1 (MCTR1), a bioactive lipid mediator that possess potent anti-inflammatory and proresolving actions. In Rattus norvegicus (Rat), this protein is Leukotriene C4 synthase (Ltc4s).